The primary structure comprises 214 residues: Holliday junction branch migration complex subunit RuvA (214 aa).

The domain I stretch occupies residues 1 to 67; the sequence is MVGWLKGLIV…ADNWQFFGFK (67 aa). Positions 68–146 are domain II; that stretch reads STQERDIFRE…AFAGMDPAPS (79 aa). A flexible linker region spans residues 147–154; it reads LAEGVSSE. Residues 155–214 are domain III; the sequence is QMPESGADVEATLSMLGYDDLEVRRAIRAIAEGSDGPPPPGDDQDAWLRGCLQWLSRDSA.

It belongs to the RuvA family. In terms of assembly, homotetramer. Forms an RuvA(8)-RuvB(12)-Holliday junction (HJ) complex. HJ DNA is sandwiched between 2 RuvA tetramers; dsDNA enters through RuvA and exits via RuvB. An RuvB hexamer assembles on each DNA strand where it exits the tetramer. Each RuvB hexamer is contacted by two RuvA subunits (via domain III) on 2 adjacent RuvB subunits; this complex drives branch migration. In the full resolvosome a probable DNA-RuvA(4)-RuvB(12)-RuvC(2) complex forms which resolves the HJ.

It localises to the cytoplasm. The RuvA-RuvB-RuvC complex processes Holliday junction (HJ) DNA during genetic recombination and DNA repair, while the RuvA-RuvB complex plays an important role in the rescue of blocked DNA replication forks via replication fork reversal (RFR). RuvA specifically binds to HJ cruciform DNA, conferring on it an open structure. The RuvB hexamer acts as an ATP-dependent pump, pulling dsDNA into and through the RuvAB complex. HJ branch migration allows RuvC to scan DNA until it finds its consensus sequence, where it cleaves and resolves the cruciform DNA. The protein is Holliday junction branch migration complex subunit RuvA of Synechococcus sp. (strain CC9605).